A 260-amino-acid polypeptide reads, in one-letter code: Hydroxyethylthiazole kinase 1 (260 aa).

Met39 serves as a coordination point for substrate. Residues Arg115 and Thr160 each contribute to the ATP site. A substrate-binding site is contributed by Gly187.

The protein belongs to the Thz kinase family. Requires Mg(2+) as cofactor.

The catalysed reaction is 5-(2-hydroxyethyl)-4-methylthiazole + ATP = 4-methyl-5-(2-phosphooxyethyl)-thiazole + ADP + H(+). The protein operates within cofactor biosynthesis; thiamine diphosphate biosynthesis; 4-methyl-5-(2-phosphoethyl)-thiazole from 5-(2-hydroxyethyl)-4-methylthiazole: step 1/1. Catalyzes the phosphorylation of the hydroxyl group of 4-methyl-5-beta-hydroxyethylthiazole (THZ). The polypeptide is Hydroxyethylthiazole kinase 1 (Streptococcus pneumoniae (strain 70585)).